We begin with the raw amino-acid sequence, 185 residues long: Calcium-binding protein CML37 (185 aa).

Polar residues predominate over residues 1-12 (MTLAKNQKSSLS). A disordered region spans residues 1-45 (MTLAKNQKSSLSRLYKKVSSKRSESSRNLEDESRTSSNSSGSSSL). Over residues 21-34 (KRSESSRNLEDESR) the composition is skewed to basic and acidic residues. Residues 35 to 44 (TSSNSSGSSS) are compositionally biased toward low complexity. 4 EF-hand domains span residues 45 to 80 (LNVNELRTVFDYMDANSDGKISGEELQSCVSLLGGA), 81 to 116 (LSSREVEEVVKTSDVDGDGFIDFEEFLKLMEGEDGS), 119 to 154 (ERRKELKEAFGMYVMEGEEFITAASLRRTLSRLGES), and 155 to 185 (CTVDACKVMIRGFDQNDDGVLSFDEFVLMMR). The Ca(2+) site is built by D58, N60, D62, K64, E69, D94, D96, D98, and E105. 4 residues coordinate Ca(2+): D168, N170, D172, and E179.

Binds to ABCG36. As to expression, expressed in cotyledons, stipule, young leaves and at the hypocotyl-root junction. In mature root, expressed in the stele, cortex, emerging lateral root, root tip and root cap. In mature plant, expressed at the base of cauline and floral branches, and in rosette and cauline leaves. Expressed from stage 9 to 14 of flower development in anthers. At stage 15, expressed in carpel, sepals, petals and pollen until dehiscence. Expressed in developing seeds and young siliques.

In terms of biological role, potential calcium sensor that binds calcium in vitro. This is Calcium-binding protein CML37 from Arabidopsis thaliana (Mouse-ear cress).